The primary structure comprises 1336 residues: pre-mRNA 3' end processing protein WDR33 (1336 aa).

The residue at position 2 (A2) is an N-acetylalanine. S7 bears the Phosphoserine mark. The residue at position 46 (K46) is an N6-acetyllysine. WD repeat units follow at residues 117 to 156 (KVKC…FETI), 159 to 198 (AHDS…VKMF), 200 to 239 (AHKE…EERI), 242 to 283 (GHGA…SLAT), 286 to 325 (AHKN…EELQ), 329 to 369 (GHKK…EVGG), and 373 to 412 (AHEG…DKMR). Glycyl lysine isopeptide (Lys-Gly) (interchain with G-Cter in SUMO2) cross-links involve residues K526, K530, and K560. Positions 568–1336 (QVEQIQPPPS…GASRGGGRGR (769 aa)) are disordered. A compositionally biased stretch (pro residues) spans 573–590 (QPPPSSGTPLLGPQPFPG). Residues 594–607 (MSQIPQGFQQPHPS) are compositionally biased toward polar residues. Positions 608 to 643 (QQMPMNMAQMGPPGPQGQFRPPGPQGQMGPQGPPLH) are enriched in low complexity. The region spanning 618–770 (GPPGPQGQFR…GPGSQGIQGP (153 aa)) is the Collagen-like domain. Residues 683–695 (PHGPLGPQGPPGP) are compositionally biased toward pro residues. 2 stretches are compositionally biased toward low complexity: residues 696–707 (QGSSGPQGHMGP) and 726–751 (QGHL…GMQG). R782 carries the omega-N-methylarginine modification. Residues 854–869 (GPPGSQSQQGPPQGSL) are compositionally biased toward low complexity. R915 carries the post-translational modification Asymmetric dimethylarginine. The segment covering 932–941 (PGLGQQGAQG) has biased composition (low complexity). Composition is skewed to basic and acidic residues over residues 971-989 (SERR…ERGP) and 998-1034 (GPPD…EFEG). R987 is modified (omega-N-methylarginine). The residue at position 1035 (R1035) is an Omega-N-methylarginine. Basic and acidic residues-rich tracts occupy residues 1056–1068 (PDHR…DGRG) and 1078–1122 (EGRR…RGRD). Acidic residues predominate over residues 1130–1140 (FGPEENFDASE). The segment covering 1141-1150 (EAARGRDLRG) has biased composition (basic and acidic residues). Residues 1151-1160 (RGRGTPRGGR) show a composition bias toward basic residues. Basic and acidic residues-rich tracts occupy residues 1169–1217 (EFPR…RERS) and 1242–1259 (SEHR…DRGG). Residue S1210 is modified to Phosphoserine. Position 1262 is an omega-N-methylarginine (R1262). The segment covering 1281–1293 (DGEHHDGYHRDEP) has biased composition (basic and acidic residues). Residues 1301 to 1326 (GTPSRGGRSGSNWGRGSNMNSGPPRR) show a composition bias toward low complexity. The residue at position 1315 (R1315) is an Asymmetric dimethylarginine; alternate. R1315 bears the Omega-N-methylarginine; alternate mark.

The protein belongs to the WD repeat WDR33 family. As to quaternary structure, component of the cleavage and polyadenylation specificity factor (CPSF) module of the pre-mRNA 3'-end processing complex. Interacts with CPSF3/CPSF73. Most highly expressed in testis.

The protein resides in the nucleus. Essential for both cleavage and polyadenylation of pre-mRNA 3' ends. The chain is pre-mRNA 3' end processing protein WDR33 (WDR33) from Homo sapiens (Human).